A 205-amino-acid polypeptide reads, in one-letter code: GTP cyclohydrolase-2 (205 aa).

Position 49-53 (49-53) interacts with GTP; it reads RIHSE. Residues C54, C65, and C67 each coordinate Zn(2+). GTP-binding positions include Q70, 92 to 94, and T114; that span reads EGR. D126 (proton acceptor) is an active-site residue. Catalysis depends on R128, which acts as the Nucleophile. GTP contacts are provided by T149 and K154.

It belongs to the GTP cyclohydrolase II family. It depends on Zn(2+) as a cofactor.

The catalysed reaction is GTP + 4 H2O = 2,5-diamino-6-hydroxy-4-(5-phosphoribosylamino)-pyrimidine + formate + 2 phosphate + 3 H(+). It participates in cofactor biosynthesis; riboflavin biosynthesis; 5-amino-6-(D-ribitylamino)uracil from GTP: step 1/4. In terms of biological role, catalyzes the conversion of GTP to 2,5-diamino-6-ribosylamino-4(3H)-pyrimidinone 5'-phosphate (DARP), formate and pyrophosphate. This Shewanella denitrificans (strain OS217 / ATCC BAA-1090 / DSM 15013) protein is GTP cyclohydrolase-2.